Reading from the N-terminus, the 252-residue chain is Hydroxyacylglutathione hydrolase (252 aa).

Zn(2+) contacts are provided by histidine 54, histidine 56, aspartate 58, histidine 59, histidine 111, aspartate 128, and histidine 166.

The protein belongs to the metallo-beta-lactamase superfamily. Glyoxalase II family. Monomer. The cofactor is Zn(2+).

The catalysed reaction is an S-(2-hydroxyacyl)glutathione + H2O = a 2-hydroxy carboxylate + glutathione + H(+). It participates in secondary metabolite metabolism; methylglyoxal degradation; (R)-lactate from methylglyoxal: step 2/2. In terms of biological role, thiolesterase that catalyzes the hydrolysis of S-D-lactoyl-glutathione to form glutathione and D-lactic acid. The polypeptide is Hydroxyacylglutathione hydrolase (Aliivibrio fischeri (strain ATCC 700601 / ES114) (Vibrio fischeri)).